Reading from the N-terminus, the 315-residue chain is PIH1 domain-containing protein 2 (315 aa).

Belongs to the PIH1 family.

The chain is PIH1 domain-containing protein 2 (Pih1d2) from Mus musculus (Mouse).